Reading from the N-terminus, the 403-residue chain is Arginine biosynthesis bifunctional protein ArgJ (403 aa).

The substrate site is built by threonine 149, lysine 175, threonine 186, glutamate 272, asparagine 398, and threonine 403. Catalysis depends on threonine 186, which acts as the Nucleophile.

The protein belongs to the ArgJ family. Heterotetramer of two alpha and two beta chains.

The protein resides in the cytoplasm. It catalyses the reaction N(2)-acetyl-L-ornithine + L-glutamate = N-acetyl-L-glutamate + L-ornithine. The enzyme catalyses L-glutamate + acetyl-CoA = N-acetyl-L-glutamate + CoA + H(+). It participates in amino-acid biosynthesis; L-arginine biosynthesis; L-ornithine and N-acetyl-L-glutamate from L-glutamate and N(2)-acetyl-L-ornithine (cyclic): step 1/1. Its pathway is amino-acid biosynthesis; L-arginine biosynthesis; N(2)-acetyl-L-ornithine from L-glutamate: step 1/4. Catalyzes two activities which are involved in the cyclic version of arginine biosynthesis: the synthesis of N-acetylglutamate from glutamate and acetyl-CoA as the acetyl donor, and of ornithine by transacetylation between N(2)-acetylornithine and glutamate. The protein is Arginine biosynthesis bifunctional protein ArgJ of Caldanaerobacter subterraneus subsp. tengcongensis (strain DSM 15242 / JCM 11007 / NBRC 100824 / MB4) (Thermoanaerobacter tengcongensis).